The chain runs to 116 residues: Distal membrane-arm assembly complex protein 1 (116 aa).

The interval 1–39 (MGSRLSQPFESYITAPPGTAAAPAKPAPPATPGAPTSPA) is disordered. Over residues 14 to 24 (TAPPGTAAAPA) the composition is skewed to low complexity. Transmembrane regions (helical) follow at residues 52–69 (VLSGLGLMGAGGYVYWVA) and 82–104 (WTITQMVIGLSENQGIATWGIVV).

As to quaternary structure, interacts with incompletely assembled mitochondrial NADH:ubiquinone oxidoreductase complex (complex I).

It is found in the mitochondrion inner membrane. Its function is as follows. Required for the assembly of the mitochondrial NADH:ubiquinone oxidoreductase complex (complex I). Involved in the assembly of the distal region of complex I. The protein is Distal membrane-arm assembly complex protein 1 of Homo sapiens (Human).